The primary structure comprises 271 residues: Phosphate import ATP-binding protein PstB (271 aa).

Residues 25–266 enclose the ABC transporter domain; that stretch reads FDTKNLNLWY…PSDKRTEDYI (242 aa). ATP is bound at residue 57 to 64; the sequence is GPSGCGKS.

Belongs to the ABC transporter superfamily. Phosphate importer (TC 3.A.1.7) family. As to quaternary structure, the complex is composed of two ATP-binding proteins (PstB), two transmembrane proteins (PstC and PstA) and a solute-binding protein (PstS).

It is found in the cell membrane. The enzyme catalyses phosphate(out) + ATP + H2O = ADP + 2 phosphate(in) + H(+). Its function is as follows. Part of the ABC transporter complex PstSACB involved in phosphate import. Responsible for energy coupling to the transport system. The polypeptide is Phosphate import ATP-binding protein PstB (Bacillus anthracis).